The sequence spans 281 residues: Undecaprenyl-diphosphatase (281 aa).

Helical transmembrane passes span I4–I24, A45–I65, W89–F109, F113–L133, L152–T172, S190–L210, G225–I245, and F257–V277.

The protein belongs to the UppP family.

The protein localises to the cell membrane. The catalysed reaction is di-trans,octa-cis-undecaprenyl diphosphate + H2O = di-trans,octa-cis-undecaprenyl phosphate + phosphate + H(+). Its function is as follows. Catalyzes the dephosphorylation of undecaprenyl diphosphate (UPP). Confers resistance to bacitracin. This Streptococcus pneumoniae (strain Hungary19A-6) protein is Undecaprenyl-diphosphatase.